A 201-amino-acid polypeptide reads, in one-letter code: uncharacterized protein (201 aa).

A disordered region spans residues 53–74 (PKKNTAHKNSTTSTVASSGNTT). Positions 59 to 74 (HKNSTTSTVASSGNTT) are enriched in polar residues. Positions 88 to 136 (AKRLSHKEVERRRREAISEGIKELANIVPGCEKNKGSILQRTAQYIRSL) constitute a bHLH domain.

It localises to the nucleus. This is an uncharacterized protein from Schizosaccharomyces pombe (strain 972 / ATCC 24843) (Fission yeast).